A 234-amino-acid chain; its full sequence is MSLIVKICGLSEPETLEAALEAGADMVGLVFFPPSPRNVDLARAAELAARARGRAEIAALTVDADARLLDAIAREVRPDWLQLHGNEPPEAVAALRETYDARVMKAVALATRADLAKVAPYVSVADRILFDARAPKDATRPGGLGVPFDWRILEGADPGLPFVLSGGLHADNLSEALALVRPHGVDVSSGVERTIGVKDADMIRAFIRAARAASSSPRPVDGESPAFQRSEKAG.

The disordered stretch occupies residues arginine 211–glycine 234.

This sequence belongs to the TrpF family.

It carries out the reaction N-(5-phospho-beta-D-ribosyl)anthranilate = 1-(2-carboxyphenylamino)-1-deoxy-D-ribulose 5-phosphate. It participates in amino-acid biosynthesis; L-tryptophan biosynthesis; L-tryptophan from chorismate: step 3/5. The chain is N-(5'-phosphoribosyl)anthranilate isomerase from Afipia carboxidovorans (strain ATCC 49405 / DSM 1227 / KCTC 32145 / OM5) (Oligotropha carboxidovorans).